We begin with the raw amino-acid sequence, 247 residues long: Uridylate kinase (247 aa).

Residue 17–20 (KFSG) participates in ATP binding. G59 is a UMP binding site. The ATP site is built by G60 and R64. UMP contacts are provided by residues D79 and 140-147 (TGNPFFTT). Residues T167, Y173, and D176 each contribute to the ATP site.

The protein belongs to the UMP kinase family. As to quaternary structure, homohexamer.

Its subcellular location is the cytoplasm. It carries out the reaction UMP + ATP = UDP + ADP. Its pathway is pyrimidine metabolism; CTP biosynthesis via de novo pathway; UDP from UMP (UMPK route): step 1/1. With respect to regulation, inhibited by UTP. In terms of biological role, catalyzes the reversible phosphorylation of UMP to UDP. This is Uridylate kinase from Legionella pneumophila (strain Paris).